The following is a 139-amino-acid chain: Hydrogenase maturation factor HypA (139 aa).

A Ni(2+)-binding site is contributed by histidine 2. Residues cysteine 73, cysteine 76, cysteine 110, and cysteine 113 each contribute to the Zn(2+) site.

Belongs to the HypA/HybF family.

Functionally, involved in the maturation of [NiFe] hydrogenases. Required for nickel insertion into the metal center of the hydrogenase. This chain is Hydrogenase maturation factor HypA, found in Pyrococcus furiosus (strain ATCC 43587 / DSM 3638 / JCM 8422 / Vc1).